The following is a 614-amino-acid chain: Zinc metalloproteinase-disintegrin-like HR1b (614 aa).

The first 20 residues, 1–20 (MIQVLLVTICLAVFPYQGSS), serve as a signal peptide directing secretion. Residues 21–191 (IILESGNVND…KASKLVVTAE (171 aa)) constitute a propeptide that is removed on maturation. Gln192 is subject to Pyrrolidone carboxylic acid. The 197-residue stretch at 198–394 (RYIKLAIVVD…HKPQCILNAP (197 aa)) folds into the Peptidase M12B domain. N-linked (GlcNAc...) asparagine glycosylation occurs at Asn264. Intrachain disulfides connect Cys309/Cys389, Cys349/Cys373, and Cys351/Cys356. His334 contacts Zn(2+). Glu335 is a catalytic residue. Zn(2+) is bound by residues His338 and His344. A glycan (N-linked (GlcNAc...) asparagine) is linked at Asn372. A propeptide spanning residues 395–398 (SKTD) is cleaved from the precursor. A Disintegrin domain is found at 402 to 488 (PPVCGNELLE…DCPTDRFHRN (87 aa)). Val404, Asn407, Leu409, Glu411, Glu414, and Asp417 together coordinate Ca(2+). 22 disulfides stabilise this stretch: Cys405-Cys424, Cys405-Cys434, Cys416-Cys429, Cys416-Cys434, Cys418-Cys424, Cys428-Cys451, Cys442-Cys448, Cys447-Cys473, Cys460-Cys480, Cys467-Cys492, Cys467-Cys499, Cys492-Cys504, Cys499-Cys504, Cys511-Cys526, Cys511-Cys561, Cys526-Cys568, Cys539-Cys549, Cys549-Cys556, Cys556-Cys593, Cys561-Cys568, Cys587-Cys598, and Cys593-Cys598. The short motif at 466-468 (ECD) is the D/ECD-tripeptide element. The N-linked (GlcNAc...) asparagine glycan is linked to Asn518. A glycan (N-linked (GlcNAc...) asparagine) is linked at Asn571. A propeptide spanning residues 608–614 (TTVFSLI) is cleaved from the precursor.

It belongs to the venom metalloproteinase (M12B) family. P-III subfamily. P-IIIb sub-subfamily. In terms of assembly, monomer. Requires Zn(2+) as cofactor. In terms of tissue distribution, expressed by the venom gland.

It is found in the secreted. Its function is as follows. Zinc protease that induces hemorrhage. Has preference for Tyr, Leu, Arg, Met, and Phe at the P1 position, in descending order (in vitro). Shows equal preference for the sequences of Ala-Asp and Arg-Ile at the P3-P2 position with different enzyme cleavage sites across the P1 position: the N-terminus side for Ala-Asp and the C-terminus side for Arg-Ile. Functionally, inhibits platelet aggregation induced by ADP, thrombin, platelet-activating factor and collagen. Acts by inhibiting fibrinogen interaction with platelet receptors alpha-IIb/beta-3 (ITGA2B/ITGB3). The chain is Zinc metalloproteinase-disintegrin-like HR1b from Protobothrops flavoviridis (Habu).